A 145-amino-acid chain; its full sequence is D-aminoacyl-tRNA deacylase (145 aa).

The Gly-cisPro motif, important for rejection of L-amino acids motif lies at 137–138 (GP).

Belongs to the DTD family. As to quaternary structure, homodimer.

It is found in the cytoplasm. It carries out the reaction glycyl-tRNA(Ala) + H2O = tRNA(Ala) + glycine + H(+). The catalysed reaction is a D-aminoacyl-tRNA + H2O = a tRNA + a D-alpha-amino acid + H(+). An aminoacyl-tRNA editing enzyme that deacylates mischarged D-aminoacyl-tRNAs. Also deacylates mischarged glycyl-tRNA(Ala), protecting cells against glycine mischarging by AlaRS. Acts via tRNA-based rather than protein-based catalysis; rejects L-amino acids rather than detecting D-amino acids in the active site. By recycling D-aminoacyl-tRNA to D-amino acids and free tRNA molecules, this enzyme counteracts the toxicity associated with the formation of D-aminoacyl-tRNA entities in vivo and helps enforce protein L-homochirality. In Dinoroseobacter shibae (strain DSM 16493 / NCIMB 14021 / DFL 12), this protein is D-aminoacyl-tRNA deacylase.